Consider the following 496-residue polypeptide: Aspartyl/glutamyl-tRNA(Asn/Gln) amidotransferase subunit B (496 aa).

A disordered region spans residues 475-496; sequence TGGSADPSKVNTLLREQLEDKK.

This sequence belongs to the GatB/GatE family. GatB subfamily. In terms of assembly, heterotrimer of A, B and C subunits.

The catalysed reaction is L-glutamyl-tRNA(Gln) + L-glutamine + ATP + H2O = L-glutaminyl-tRNA(Gln) + L-glutamate + ADP + phosphate + H(+). It catalyses the reaction L-aspartyl-tRNA(Asn) + L-glutamine + ATP + H2O = L-asparaginyl-tRNA(Asn) + L-glutamate + ADP + phosphate + 2 H(+). In terms of biological role, allows the formation of correctly charged Asn-tRNA(Asn) or Gln-tRNA(Gln) through the transamidation of misacylated Asp-tRNA(Asn) or Glu-tRNA(Gln) in organisms which lack either or both of asparaginyl-tRNA or glutaminyl-tRNA synthetases. The reaction takes place in the presence of glutamine and ATP through an activated phospho-Asp-tRNA(Asn) or phospho-Glu-tRNA(Gln). This Haloquadratum walsbyi (strain DSM 16790 / HBSQ001) protein is Aspartyl/glutamyl-tRNA(Asn/Gln) amidotransferase subunit B.